The following is a 254-amino-acid chain: Imidazole glycerol phosphate synthase subunit HisF (254 aa).

Active-site residues include Asp-11 and Asp-130.

This sequence belongs to the HisA/HisF family. In terms of assembly, heterodimer of HisH and HisF.

The protein resides in the cytoplasm. The catalysed reaction is 5-[(5-phospho-1-deoxy-D-ribulos-1-ylimino)methylamino]-1-(5-phospho-beta-D-ribosyl)imidazole-4-carboxamide + L-glutamine = D-erythro-1-(imidazol-4-yl)glycerol 3-phosphate + 5-amino-1-(5-phospho-beta-D-ribosyl)imidazole-4-carboxamide + L-glutamate + H(+). The protein operates within amino-acid biosynthesis; L-histidine biosynthesis; L-histidine from 5-phospho-alpha-D-ribose 1-diphosphate: step 5/9. IGPS catalyzes the conversion of PRFAR and glutamine to IGP, AICAR and glutamate. The HisF subunit catalyzes the cyclization activity that produces IGP and AICAR from PRFAR using the ammonia provided by the HisH subunit. The chain is Imidazole glycerol phosphate synthase subunit HisF from Oceanobacillus iheyensis (strain DSM 14371 / CIP 107618 / JCM 11309 / KCTC 3954 / HTE831).